A 196-amino-acid polypeptide reads, in one-letter code: Cilia- and flagella-associated protein 107 (196 aa).

2 mn regions span residues 47-62 (TPQC…MPDH) and 97-109 (ISTY…RHNY).

Microtubule inner protein component of sperm flagellar doublet microtubules.

It localises to the cytoplasm. It is found in the cytoskeleton. The protein resides in the cilium axoneme. Its subcellular location is the flagellum axoneme. Its function is as follows. Microtubule inner protein (MIP) part of the dynein-decorated doublet microtubules (DMTs) in cilia axoneme, which is required for motile cilia beating. The chain is Cilia- and flagella-associated protein 107 from Mus musculus (Mouse).